The primary structure comprises 198 residues: tRNA (pseudouridine(54)-N(1))-methyltransferase (198 aa).

Residues Leu130, Gly153, 176–181 (LSPLEL), and Cys186 contribute to the S-adenosyl-L-methionine site.

Belongs to the methyltransferase superfamily. TrmY family. Homodimer.

The protein localises to the cytoplasm. The catalysed reaction is pseudouridine(54) in tRNA + S-adenosyl-L-methionine = N(1)-methylpseudouridine(54) in tRNA + S-adenosyl-L-homocysteine + H(+). Functionally, specifically catalyzes the N1-methylation of pseudouridine at position 54 (Psi54) in tRNAs. The chain is tRNA (pseudouridine(54)-N(1))-methyltransferase from Methanococcus maripaludis (strain C5 / ATCC BAA-1333).